The following is a 229-amino-acid chain: UPF0488 protein C8orf33 homolog (229 aa).

Ala-2 bears the N-acetylalanine mark. The residue at position 27 (Arg-27) is an Omega-N-methylarginine. The disordered stretch occupies residues 55 to 101 (SRAHPLGDEGGTASKKQNKKKKTRNRASVANGGEKASEKLAPEEVPL). Over residues 70–79 (KQNKKKKTRN) the composition is skewed to basic residues. Position 82 is a phosphoserine (Ser-82).

The protein belongs to the UPF0488 family.

This chain is UPF0488 protein C8orf33 homolog, found in Pongo abelii (Sumatran orangutan).